Here is a 377-residue protein sequence, read N- to C-terminus: Cell division protein FtsZ (377 aa).

The span at 1–16 (MDSIVDDAIDEAEDMG) shows a compositional bias: acidic residues. A disordered region spans residues 1–33 (MDSIVDDAIDEAEDMGDGSAEVGGPTDINRSGT). GTP is bound by residues 57–61 (GAGGN), 144–146 (GTG), Glu175, Arg179, and Asp222.

Belongs to the FtsZ family. In terms of assembly, homodimer. Polymerizes to form a dynamic ring structure in a strictly GTP-dependent manner. Interacts directly with several other division proteins.

It is found in the cytoplasm. Functionally, essential cell division protein that forms a contractile ring structure (Z ring) at the future cell division site. The regulation of the ring assembly controls the timing and the location of cell division. One of the functions of the FtsZ ring is to recruit other cell division proteins to the septum to produce a new cell wall between the dividing cells. Binds GTP and shows GTPase activity. This chain is Cell division protein FtsZ, found in Haloferax mediterranei (strain ATCC 33500 / DSM 1411 / JCM 8866 / NBRC 14739 / NCIMB 2177 / R-4) (Halobacterium mediterranei).